A 904-amino-acid chain; its full sequence is Patched domain-containing protein 4 (904 aa).

Residues 41–61 (HPVFFLTVPAVLTITFGLSAL) traverse the membrane as a helical segment. N-linked (GlcNAc...) asparagine glycosylation is present at Asn-149. One can recognise an SSD domain in the interval 291-450 (TRSKVLVSLV…FSFFGSCLVF (160 aa)). Transmembrane regions (helical) follow at residues 295-312 (VLVS…SSSM), 323-343 (GLLG…IFFI), 351-371 (TLLG…FELL), 394-414 (VMVT…MGAS), 431-451 (VSIL…LVFA), and 523-543 (PFVV…CLQI). Asn-625 carries an N-linked (GlcNAc...) asparagine glycan. Transmembrane regions (helical) follow at residues 718 to 738 (PVLI…FLVI), 744 to 764 (FWLI…MTLW), and 771 to 791 (ISIL…APLL). Asn-820 is a glycosylation site (N-linked (GlcNAc...) asparagine). Transmembrane regions (helical) follow at residues 823 to 843 (SFLI…FTLF) and 845 to 865 (CLLL…PVFL).

The protein belongs to the patched family.

Its subcellular location is the membrane. Its function is as follows. Could act as a repressor of canonical hedgehog signaling by antagonizing the effects of SMO, as suggested by down-regulation of hedgehog target genes, including GLI1, PTCH1, and PTCH2 in PTCHD4-expressing cells. This is Patched domain-containing protein 4 (Ptchd4) from Mus musculus (Mouse).